A 330-amino-acid polypeptide reads, in one-letter code: MEFSSQDDDFGGDDSAANATRASGNRRSFGDLEDDEDDIFGSTTVAPGVRTGMILSLRGSLKNCKDDLASCQNELESAKTEIQKWKSAFQNESFVPAGKSPEPRFLIDYIQNLKSSEKSLKEQLEIAKRKEASCIVQYAKREQEMAELKSAVRDLKSQLKPASMQARRLLLDPAIHEEFSRLKNLVEEKDKKIKELQDNIAAVTFTPQSKNGKMLMAKCRTLQEENEEIGHQAAEGKIHELAIKLAMQKSQNAELRSQFEGLYKHMEELTNDVERSNETVIILQEKLEEKEKEIERVKKGLEIVSELVGDKKDEVDEIDEDAKEEIAGGE.

Residue M1 is modified to N-acetylmethionine. A compositionally biased stretch (acidic residues) spans 1 to 12; that stretch reads MEFSSQDDDFGG. Residues 1–43 are disordered; that stretch reads MEFSSQDDDFGGDDSAANATRASGNRRSFGDLEDDEDDIFGST. Polar residues predominate over residues 17–26; sequence ANATRASGNR. Residues 56 to 308 adopt a coiled-coil conformation; the sequence is SLRGSLKNCK…KGLEIVSELV (253 aa).

Belongs to the fl(2)d family. In terms of assembly, forms homodimers. Interacts with MTA/EMB1706. Interacts with FKBP12; interaction is inhibited by the immunosuppressive drug FK506. Interacts with VIR. Associates with MTA, MTB, VIR and HAKAI to form the m6A writer complex which is essential for adenosine methylation at specific mRNA sequences. In terms of tissue distribution, ubiquitously expressed with higher levels in primary and lateral roots, leaves, trichomes, and in pollen grains (at protein level).

The protein resides in the nucleus speckle. Its subcellular location is the nucleus. It is found in the nucleoplasm. In terms of biological role, probable regulatory subunit of the N6-methyltransferase complex, a multiprotein complex that mediates N6-methyladenosine (m6A) methylation at the 5'-[AG]GAC-3' consensus sites of some mRNAs. Associates with MTA, MTB, VIR and HAKAI to form the m6A writer complex which is essential for adenosine methylation at specific mRNA sequences. N6-methyladenosine (m6A) plays a role in mRNA stability, processing, translation efficiency and editing. Essential protein required during endosperm development and embryogenesis. Involved in endoreduplication, especially in trichomes. May play a role in splicing events. This is FKBP12-interacting protein of 37 kDa from Arabidopsis thaliana (Mouse-ear cress).